The sequence spans 250 residues: Triosephosphate isomerase (250 aa).

9 to 11 serves as a coordination point for substrate; it reads NWK. H95 acts as the Electrophile in catalysis. The active-site Proton acceptor is the E167. Substrate contacts are provided by residues G173, S212, and 233–234; that span reads GG.

The protein belongs to the triosephosphate isomerase family. Homodimer.

The protein resides in the cytoplasm. The catalysed reaction is D-glyceraldehyde 3-phosphate = dihydroxyacetone phosphate. It participates in carbohydrate biosynthesis; gluconeogenesis. It functions in the pathway carbohydrate degradation; glycolysis; D-glyceraldehyde 3-phosphate from glycerone phosphate: step 1/1. Its function is as follows. Involved in the gluconeogenesis. Catalyzes stereospecifically the conversion of dihydroxyacetone phosphate (DHAP) to D-glyceraldehyde-3-phosphate (G3P). The polypeptide is Triosephosphate isomerase (Psychromonas ingrahamii (strain DSM 17664 / CCUG 51855 / 37)).